The chain runs to 321 residues: Cytochrome c biogenesis protein CcsA (321 aa).

A run of 8 helical transmembrane segments spans residues 9 to 29 (ILTHISFSIISIVITIHLMTL), 44 to 64 (GIISTFFSITGLLITRWIYSG), 71 to 91 (LYESLIFLSWSFSIIHMIPYL), 98 to 118 (LSVITVPSVIFTQGFVTSCLS), 143 to 163 (MLLSYATLLCGSLLSVALLVI), 225 to 245 (IISLGFIFLTMGILSGAVWAN), 260 to 280 (WAFITWTIFAIYSHIRININF), and 288 to 308 (VASIGFLIIWICYFGINLLGI).

The protein belongs to the CcmF/CycK/Ccl1/NrfE/CcsA family. May interact with Ccs1.

The protein localises to the plastid. The protein resides in the chloroplast thylakoid membrane. Its function is as follows. Required during biogenesis of c-type cytochromes (cytochrome c6 and cytochrome f) at the step of heme attachment. This is Cytochrome c biogenesis protein CcsA from Dioscorea elephantipes (Elephant's foot yam).